The sequence spans 214 residues: Ras-like protein 2 (214 aa).

Residues Gly-19–Cys-24, Val-35–Thr-41, Ala-65–Gly-66, Asn-122–Asp-125, and Ser-152–Lys-154 contribute to the GTP site. An Effector region motif is present at residues Tyr-38 to Tyr-46. Positions Gln-178–Glu-197 are disordered. Cys-211 bears the Cysteine methyl ester mark. Cys-211 carries the S-farnesyl cysteine lipid modification. A propeptide spans Val-212–Met-214 (removed in mature form).

Belongs to the small GTPase superfamily. Ras family. As to quaternary structure, interacts with farnesyltransferase beta subunit RAM1.

It is found in the cell membrane. Its activity is regulated as follows. Alternates between an inactive form bound to GDP and an active form bound to GTP. Activated by a guanine nucleotide-exchange factor (GEF) and inactivated by a GTPase-activating protein (GAP). Functionally, modulates the activity of the adenylate cyclase catalytic subunit and therefore affects the biosynthesis of cyclic-AMP. Plays a role in both surface attachment and surface recognition of appressoria, a highly specialized infection structure for plant penetration. Regulates appressorium formation by coordinated regulation of cAMP signaling and Pmk1 MAPK pathways. The protein is Ras-like protein 2 of Pyricularia oryzae (strain 70-15 / ATCC MYA-4617 / FGSC 8958) (Rice blast fungus).